The following is a 67-amino-acid chain: Small ribosomal subunit protein eS17 (67 aa).

This sequence belongs to the eukaryotic ribosomal protein eS17 family.

The chain is Small ribosomal subunit protein eS17 from Thermococcus sibiricus (strain DSM 12597 / MM 739).